The chain runs to 103 residues: Putative double-stranded DNA mimic protein HAPS_1002 (103 aa).

This sequence belongs to the putative dsDNA mimic protein family.

Functionally, may act as a double-stranded DNA (dsDNA) mimic. Probably regulates the activity of a dsDNA-binding protein. In Glaesserella parasuis serovar 5 (strain SH0165) (Haemophilus parasuis), this protein is Putative double-stranded DNA mimic protein HAPS_1002.